A 415-amino-acid chain; its full sequence is Styrene monooxygenase StyA (415 aa).

This sequence belongs to the StyA family. In terms of assembly, homodimer. A direct interaction with the monooxygenase reductase component StyB seems not to be necessary for the enzymatic activity.

It carries out the reaction styrene + FADH2 + O2 = (S)-styrene oxide + FAD + H2O + H(+). It functions in the pathway aromatic compound metabolism. Its function is as follows. Styrene monooxygenase which catalyzes the first step in the aerobic styrene degradation pathway by enantioselective epoxidation of the vinyl side chain. In a two-component system, a reductase utilizes NADH to reduce FAD, which is then transferred to the oxygenase; the electron transfer is proposed to occur via a diffusing flavin. This chain is Styrene monooxygenase StyA (styA), found in Pseudomonas sp.